Here is a 531-residue protein sequence, read N- to C-terminus: Serine protease gd (531 aa).

The signal sequence occupies residues 1–19 (MRLHLAAILILCIEHVTKA). The disordered stretch occupies residues 155 to 174 (PEEEEVRKTDDKPPSTPHIQ). Positions 246-531 (IESDSADSLP…FLDWITAFVI (286 aa)) constitute a Peptidase S1 domain. A glycan (N-linked (GlcNAc...) asparagine) is linked at asparagine 272. A disulfide bond links cysteine 280 and cysteine 296. Active-site charge relay system residues include histidine 295 and aspartate 350. N-linked (GlcNAc...) asparagine glycans are attached at residues asparagine 397 and asparagine 445. Cysteine 432 and cysteine 449 form a disulfide bridge. Serine 471 acts as the Charge relay system in catalysis.

The protein belongs to the peptidase S1 family. Proteolytically activated by the protease ndl. Expression begins in previtellogenic stages and is seen in germline-derived nurse cells of the germarium. Expression continues throughout oogenesis with transcripts from the nurse cells accumulating in the oocytes. Most abundant in the ovaries, the level of protein decreases from the moment of egg laying and is essentially gone by 4 hours.

Its subcellular location is the secreted. Component of the extracellular signaling pathway that establishes the dorsal-ventral pathway of the embryo. A protease cascade involving ndl, gd, snk and ea results in activation of the spz Toll receptor ligand; acts downstream of ndl but upstream of snk and ea. Activation of ea requires activation of the ndl-gd-snk protease cascade and sulfation of a vitelline membrane component by pip. Localized activation of the Toll receptor in the ventral region of the embryo defines cell identities along the dorsal-ventral continuum. The sequence is that of Serine protease gd from Drosophila melanogaster (Fruit fly).